A 483-amino-acid chain; its full sequence is Altronate oxidoreductase (483 aa).

18–29 (IIQFGEGNFLRA) is an NAD(+) binding site.

Belongs to the mannitol dehydrogenase family. UxaB subfamily.

The enzyme catalyses D-altronate + NAD(+) = keto-D-tagaturonate + NADH + H(+). It functions in the pathway carbohydrate metabolism; pentose and glucuronate interconversion. This chain is Altronate oxidoreductase (uxaB), found in Shigella flexneri.